Consider the following 609-residue polypeptide: ATP-dependent lipid A-core flippase (609 aa).

6 helical membrane passes run 47–67, 88–108, 167–187, 190–210, 279–299, and 305–325; these read LLAA…IYLI, ILML…VGSF, AIIT…VMFV, WQLS…ISII, VIQI…AIFG, and GSSW…AAIL. The ABC transmembrane type-1 domain maps to 47-340; that stretch reads LLAAIGSIFF…LTKVNVVIQK (294 aa). The ABC transporter domain maps to 372–606; it reads VTIKDLSFAF…GGLYTRLYQS (235 aa). Position 404-411 (404-411) interacts with ATP; it reads GKSGSGKT.

The protein belongs to the ABC transporter superfamily. Lipid exporter (TC 3.A.1.106) family. As to quaternary structure, homodimer.

It localises to the cell inner membrane. The enzyme catalyses ATP + H2O + lipid A-core oligosaccharideSide 1 = ADP + phosphate + lipid A-core oligosaccharideSide 2.. Functionally, involved in lipopolysaccharide (LPS) biosynthesis. Translocates lipid A-core from the inner to the outer leaflet of the inner membrane. Transmembrane domains (TMD) form a pore in the inner membrane and the ATP-binding domain (NBD) is responsible for energy generation. The chain is ATP-dependent lipid A-core flippase from Francisella tularensis subsp. holarctica (strain LVS).